A 418-amino-acid polypeptide reads, in one-letter code: Glutamyl-tRNA reductase (418 aa).

Substrate-binding positions include 49–52 (TCNR), Ser-107, 112–114 (EPQ), and Gln-118. Cys-50 functions as the Nucleophile in the catalytic mechanism. 187-192 (GAGETI) is a binding site for NADP(+).

It belongs to the glutamyl-tRNA reductase family. In terms of assembly, homodimer.

The enzyme catalyses (S)-4-amino-5-oxopentanoate + tRNA(Glu) + NADP(+) = L-glutamyl-tRNA(Glu) + NADPH + H(+). It participates in porphyrin-containing compound metabolism; protoporphyrin-IX biosynthesis; 5-aminolevulinate from L-glutamyl-tRNA(Glu): step 1/2. Functionally, catalyzes the NADPH-dependent reduction of glutamyl-tRNA(Glu) to glutamate 1-semialdehyde (GSA). In Aeromonas salmonicida (strain A449), this protein is Glutamyl-tRNA reductase.